A 238-amino-acid polypeptide reads, in one-letter code: Small ribosomal subunit protein uS2c (238 aa).

The protein belongs to the universal ribosomal protein uS2 family.

It localises to the plastid. Its subcellular location is the chloroplast. This is Small ribosomal subunit protein uS2c (rps2) from Oltmannsiellopsis viridis (Marine flagellate).